The sequence spans 441 residues: Polycomb protein EED (441 aa).

A disordered region spans residues 1–72 (MSEREVSTVP…PGRKSWGKGK (72 aa)). Ser-2 carries the post-translational modification N-acetylserine. Phosphoserine occurs at positions 2 and 34. A compositionally biased stretch (polar residues) spans 45–61 (ESGTNTERPDTPTNTPN). Thr-55 bears the Phosphothreonine mark. Lys-66 is subject to N6,N6,N6-trimethyllysine; alternate. An N6,N6-dimethyllysine; alternate modification is found at Lys-66. Lys-66 carries the post-translational modification N6-methyllysine; alternate. An interaction with EZH2 region spans residues 81 to 441 (SFKCVNSLKE…ASIWRWDRLR (361 aa)). WD repeat units lie at residues 91 to 134 (DHNQ…EIRL), 142 to 185 (DADE…CIKH), 188 to 228 (GHGN…LVAI), and 234 to 275 (GHRD…NAIK). 3 positions are modified to N6,N6,N6-trimethyllysine; alternate: Lys-197, Lys-268, and Lys-284. An N6,N6-dimethyllysine; alternate mark is found at Lys-197, Lys-268, and Lys-284. N6-methyllysine; alternate occurs at positions 197, 268, and 284. WD repeat units follow at residues 304-341 (IHRNYVDCVRWLGDLILSKSCENAIVCWKPGKMEDDID), 359-399 (SQCD…PHKA), and 408-441 (KCGAAIRQTSFSRDSSILIAVCDDASIWRWDRLR).

The protein belongs to the WD repeat ESC family. In terms of assembly, component of the PRC2/EED-EZH2 complex, which includes EED, EZH2, SUZ12, RBBP4 and RBBP7 and possibly AEBP2. The minimum components required for methyltransferase activity of the PRC2/EED-EZH2 complex are EED, EZH2 and SUZ12. Component of the PRC2/EED-EZH1 complex, which includes EED, EZH1, SUZ12, RBBP4 and AEBP2. The PRC2 complex may also interact with DNMT1, DNMT3A, DNMT3B and PHF1 via the EZH2 subunit and with SIRT1 via the SUZ12 subunit. Interacts with HDAC, HDAC2, histone H1, KMT2A/MLL1 and YY1. May interact with ITGA4, ITGAE and ITGB7. Interacts with CDYL. Interacts with BMAL1. Post-translationally, methylated. Binding to histone H1 'Lys-26' promotes mono-, di-, and trimethylation of internal lysines.

The protein localises to the nucleus. Its function is as follows. Polycomb group (PcG) protein. Component of the PRC2/EED-EZH2 complex, which methylates 'Lys-9' and 'Lys-27' of histone H3, leading to transcriptional repression of the affected target gene. Also recognizes 'Lys-26' trimethylated histone H1 with the effect of inhibiting PRC2 complex methyltransferase activity on nucleosomal histone H3 'Lys-27', whereas H3 'Lys-27' recognition has the opposite effect, enabling the propagation of this repressive mark. The PRC2/EED-EZH2 complex may also serve as a recruiting platform for DNA methyltransferases, thereby linking two epigenetic repression systems. This chain is Polycomb protein EED (EED), found in Bos taurus (Bovine).